A 398-amino-acid polypeptide reads, in one-letter code: Galactose-3-O-sulfotransferase 2 (398 aa).

Over 1 to 10 (MMSMLGGLQR) the chain is Cytoplasmic. A helical; Signal-anchor for type II membrane protein transmembrane segment spans residues 11 to 31 (YFRVILLLLLALTLLLLAGFL). Topologically, residues 32–398 (HSDLELDTPL…PLKNIPFLGA (367 aa)) are lumenal. N-linked (GlcNAc...) asparagine glycans are attached at residues asparagine 79, asparagine 132, asparagine 179, asparagine 287, asparagine 330, and asparagine 360.

The protein belongs to the galactose-3-O-sulfotransferase family. In terms of tissue distribution, ubiquitous. Detected in heart, stomach, colon, liver and spleen, in epithelial cells lining the lower to middle layer of the crypts in colonic mucosa, hepatocytes surrounding the central vein of the liver, extravillous cytotrophoblasts in the basal plate of the septum of the placenta, renal tubules of the kidney, and neuronal cells of the cerebral cortex.

The protein resides in the golgi apparatus. It localises to the golgi stack membrane. Its pathway is protein modification; carbohydrate sulfation. Its activity is regulated as follows. Strongly inhibited by Cu(2+) and Zn(2+). In terms of biological role, transfers a sulfate group to the hydroxyl group at C3 of non-reducing beta-galactosyl residues. Acts both on type 1 (Gal-beta-1,3-GlcNAc) and type 2 (Gal-beta-1,4-GlcNAc) chains with similar efficiency. This Homo sapiens (Human) protein is Galactose-3-O-sulfotransferase 2 (GAL3ST2).